We begin with the raw amino-acid sequence, 319 residues long: Translocon-associated protein subunit alpha (319 aa).

The first 21 residues, 1-21, serve as a signal peptide directing secretion; that stretch reads MRLLPRLLLLFLLAFPAAVLL. Residues 22–208 are Lumenal-facing; it reads RGGPGGSLAV…EREDGLDGET (187 aa). Over residues 35–76 the composition is skewed to acidic residues; that stretch reads LTEDEETVEDPIIEDEDDEAEVEEDEPTDLAEEKEEEEDVSS. A disordered region spans residues 35–84; that stretch reads LTEDEETVEDPIIEDEDDEAEVEEDEPTDLAEEKEEEEDVSSEPEASPSA. Asparagine 137 and asparagine 192 each carry an N-linked (GlcNAc...) asparagine glycan. The helical transmembrane segment at 209–229 threads the bilayer; the sequence is IFMYMFLAGLGLLVVVGLHQL. The Cytoplasmic portion of the chain corresponds to 230-319; the sequence is LESRKRKRPI…SLRQLAVCGI (90 aa). Phosphoserine is present on serine 248. Position 261 is a phosphothreonine (threonine 261).

Belongs to the TRAP-alpha family. As to quaternary structure, heterotetramer of TRAP-alpha, TRAP-beta, TRAP-delta and TRAP-gamma. Interacts with palmitoylated calnexin (CALX), the interaction is required for efficient folding of glycosylated proteins.

The protein localises to the endoplasmic reticulum membrane. TRAP proteins are part of a complex whose function is to bind calcium to the ER membrane and thereby regulate the retention of ER resident proteins. May be involved in the recycling of the translocation apparatus after completion of the translocation process or may function as a membrane-bound chaperone facilitating folding of translocated proteins. The chain is Translocon-associated protein subunit alpha (Ssr1) from Rattus norvegicus (Rat).